A 41-amino-acid chain; its full sequence is Large ribosomal subunit protein bL36 (41 aa).

This sequence belongs to the bacterial ribosomal protein bL36 family.

The chain is Large ribosomal subunit protein bL36 from Rhizobium rhizogenes (strain K84 / ATCC BAA-868) (Agrobacterium radiobacter).